The chain runs to 99 residues: MMMNAFFPAMALMVLVGCSTPSPVQKAQRVKVDPLRSLNMEALCKDQAAKRYNTGEQKIDVTAFEQFQGSYEMRGYTFRKEQFVCSFDADGHFLHLSMR.

The N-terminal stretch at 1 to 17 (MMMNAFFPAMALMVLVG) is a signal peptide. A lipid anchor (N-palmitoyl cysteine) is attached at C18. C18 carries the S-diacylglycerol cysteine lipid modification.

The protein resides in the cell membrane. This is an uncharacterized protein from Shigella boydii serotype 4 (strain Sb227).